A 241-amino-acid chain; its full sequence is Ubiquinone biosynthesis O-methyltransferase (241 aa).

S-adenosyl-L-methionine contacts are provided by Arg46, Gly66, Asp87, and Met131.

It belongs to the methyltransferase superfamily. UbiG/COQ3 family.

It carries out the reaction a 3-demethylubiquinol + S-adenosyl-L-methionine = a ubiquinol + S-adenosyl-L-homocysteine + H(+). The catalysed reaction is a 3-(all-trans-polyprenyl)benzene-1,2-diol + S-adenosyl-L-methionine = a 2-methoxy-6-(all-trans-polyprenyl)phenol + S-adenosyl-L-homocysteine + H(+). Its pathway is cofactor biosynthesis; ubiquinone biosynthesis. O-methyltransferase that catalyzes the 2 O-methylation steps in the ubiquinone biosynthetic pathway. This chain is Ubiquinone biosynthesis O-methyltransferase, found in Bordetella bronchiseptica (strain ATCC BAA-588 / NCTC 13252 / RB50) (Alcaligenes bronchisepticus).